The chain runs to 229 residues: C-type lectin domain family 1 member B (229 aa).

Residues 1–33 lie on the Cytoplasmic side of the membrane; sequence MQDEDGYITLNIKTRKPALISVGSASSSWWRVM. Residue Tyr-7 is modified to Phosphotyrosine. An ITAM motif is present at residues 7–10; the sequence is YITL. The helical; Signal-anchor for type II membrane protein transmembrane segment at 34-54 threads the bilayer; sequence ALILLILCVGMVVGLVALGIW. Residues 55–229 are Extracellular-facing; sequence SVMQRNYLQG…AGMTKVDQLP (175 aa). Asn-68 carries an N-linked (GlcNAc...) asparagine glycan. A disulfide bridge links Cys-102 with Cys-113. Residues 109-217 enclose the C-type lectin domain; the sequence is YGDSCYGFFR…CENKHYLMCE (109 aa). Residues Asn-120 and Asn-134 are each glycosylated (N-linked (GlcNAc...) asparagine). 2 disulfides stabilise this stretch: Cys-130–Cys-216 and Cys-195–Cys-208.

As to quaternary structure, homodimer. Interacts (via cytoplasmic domain) with RACK1; promotes CLEC1B ubiquitination and proteasome-mediated degradation. Interacts (dimer) with SYK (via SH2 domains). Interacts with PDPN; the interaction is independent of CLEC1B glycosylation and activates CLEC1B. In terms of processing, glycosylated. Post-translationally, phosphorylated on tyrosine residue in response to rhodocytin binding. In terms of tissue distribution, expressed preferentially in the liver. Also expressed in immune cells of myeloid origin and on the surface of platelets.

The protein localises to the membrane. Its function is as follows. C-type lectin-like receptor that functions as a platelet receptor for the lymphatic endothelial marker, PDPN. After ligand activation, signals via sequential activation of SRC and SYK tyrosine kinases leading to activation of PLCG2. In terms of biological role, (Microbial infection) Acts as a receptor for the platelet-aggregating snake venom protein rhodocytin. Rhodocytin binding leads to tyrosine phosphorylation and this promotes the binding of spleen tyrosine kinase (SYK) and initiation of downstream tyrosine phosphorylation events and activation of PLCG2. (Microbial infection) Acts as an attachment factor for Human immunodeficiency virus type 1 (HIV-1) and facilitates its capture by platelets. The protein is C-type lectin domain family 1 member B (CLEC1B) of Homo sapiens (Human).